A 360-amino-acid polypeptide reads, in one-letter code: Peptide chain release factor 1 (360 aa).

Residue Gln235 is modified to N5-methylglutamine. Positions 284–313 (AKRQQAEASTRRNLLGSGDRSDRNRTYNFP) are disordered.

The protein belongs to the prokaryotic/mitochondrial release factor family. Methylated by PrmC. Methylation increases the termination efficiency of RF1.

Its subcellular location is the cytoplasm. In terms of biological role, peptide chain release factor 1 directs the termination of translation in response to the peptide chain termination codons UAG and UAA. In Citrobacter koseri (strain ATCC BAA-895 / CDC 4225-83 / SGSC4696), this protein is Peptide chain release factor 1.